The following is a 73-amino-acid chain: Sec-independent protein translocase protein TatA (73 aa).

A helical transmembrane segment spans residues 1 to 21 (MGSFSIWHWLIVLVIVMLVFG). The interval 44–73 (KSAEDPNEQIPQSTTTAEKTVDVQAKDINK) is disordered. The segment covering 52-61 (QIPQSTTTAE) has biased composition (polar residues). Residues 62–73 (KTVDVQAKDINK) are compositionally biased toward basic and acidic residues.

Belongs to the TatA/E family. In terms of assembly, the Tat system comprises two distinct complexes: a TatABC complex, containing multiple copies of TatA, TatB and TatC subunits, and a separate TatA complex, containing only TatA subunits. Substrates initially bind to the TatABC complex, which probably triggers association of the separate TatA complex to form the active translocon.

It localises to the cell inner membrane. Its function is as follows. Part of the twin-arginine translocation (Tat) system that transports large folded proteins containing a characteristic twin-arginine motif in their signal peptide across membranes. TatA could form the protein-conducting channel of the Tat system. The sequence is that of Sec-independent protein translocase protein TatA from Polynucleobacter asymbioticus (strain DSM 18221 / CIP 109841 / QLW-P1DMWA-1) (Polynucleobacter necessarius subsp. asymbioticus).